A 186-amino-acid chain; its full sequence is Peptidyl-tRNA hydrolase (186 aa).

A tRNA-binding site is contributed by Tyr14. Catalysis depends on His19, which acts as the Proton acceptor. TRNA is bound by residues Phe64, Asn66, and Asn112.

The protein belongs to the PTH family. As to quaternary structure, monomer.

Its subcellular location is the cytoplasm. It catalyses the reaction an N-acyl-L-alpha-aminoacyl-tRNA + H2O = an N-acyl-L-amino acid + a tRNA + H(+). Functionally, hydrolyzes ribosome-free peptidyl-tRNAs (with 1 or more amino acids incorporated), which drop off the ribosome during protein synthesis, or as a result of ribosome stalling. Its function is as follows. Catalyzes the release of premature peptidyl moieties from peptidyl-tRNA molecules trapped in stalled 50S ribosomal subunits, and thus maintains levels of free tRNAs and 50S ribosomes. The protein is Peptidyl-tRNA hydrolase of Listeria monocytogenes serovar 1/2a (strain ATCC BAA-679 / EGD-e).